A 196-amino-acid chain; its full sequence is Prefoldin subunit 3 (196 aa).

The residue at position 2 (alanine 2) is an N-acetylalanine. Lysine 58 bears the N6-acetyllysine mark.

It belongs to the prefoldin subunit alpha family. In terms of assembly, heterohexamer of two PFD-alpha type and four PFD-beta type subunits. Binds to the C-terminal part of VHL.

Its subcellular location is the cytoplasm. The protein localises to the nucleus. Binds specifically to cytosolic chaperonin (c-CPN) and transfers target proteins to it. Binds to nascent polypeptide chain and promotes folding in an environment in which there are many competing pathways for nonnative proteins. This Mus musculus (Mouse) protein is Prefoldin subunit 3 (Vbp1).